A 254-amino-acid chain; its full sequence is DNA repair protein RecO (254 aa).

It belongs to the RecO family.

In terms of biological role, involved in DNA repair and RecF pathway recombination. The protein is DNA repair protein RecO of Anaeromyxobacter dehalogenans (strain 2CP-C).